Reading from the N-terminus, the 521-residue chain is Phosphoethanolamine transferase EptA (521 aa).

Helical transmembrane passes span A18–V38, F47–G67, I79–L99, F118–I138, A150–T170, and F182–L202.

The protein belongs to the phosphoethanolamine transferase family. EptA subfamily.

It localises to the cell inner membrane. It functions in the pathway bacterial outer membrane biogenesis; LPS lipid A biosynthesis. Functionally, probably catalyzes the addition of a phosphoethanolamine moiety to the dephosphorylated 1-position of the disaccharide backbone of lipid A. Lipid A that is 1-phosphorylated is not a substrate for this enzyme. This Helicobacter pylori (strain ATCC 700392 / 26695) (Campylobacter pylori) protein is Phosphoethanolamine transferase EptA.